The primary structure comprises 993 residues: Desmoglein-3 (993 aa).

A signal peptide spans 1-23; the sequence is MTCLFPRALGSLALLMVVLLVQG. The propeptide occupies 24–49; sequence ELHVKPGGQHREDGTALQLAKRRYKR. Cadherin domains lie at 50–157, 158–267, 268–388, and 384–495; these read EWVK…PPIF, SQTI…FPVL, RESQ…PPSK, and RPPS…CPSV. Topologically, residues 50–617 are extracellular; that stretch reads EWVKFAKPCR…YGESSWRLGP (568 aa). 2 N-linked (GlcNAc...) asparagine glycosylation sites follow: N110 and N180. N-linked (GlcNAc...) asparagine glycans are attached at residues N459 and N546. A helical membrane pass occupies residues 618–638; the sequence is AAIGLILLGLLMLLLAPLLLL. Residues 639 to 993 are Cytoplasmic-facing; that stretch reads TCDCGSGPIG…LYTKETCSHL (355 aa). Positions 641–714 are required for interaction with CTNND1 and localization at cell-cell junctions; the sequence is DCGSGPIGGA…NTYAGGTMVE (74 aa). A disordered region spans residues 845–876; the sequence is AKQAKPGPKDSGSGADTCARSMEVPQSGSNRY. 2 Desmoglein repeat repeats span residues 905–930 and 931–961; these read MSTS…LLTE and TYST…ERVI.

As to quaternary structure, homodimer. Part of a complex that contains DSG3, PKP1, YAP1 and YWHAG; the complex is required for localization of DSG3 and YAP1 to the cell membrane in keratinocytes. Interacts with PKP2. Interacts with CTNND1; the interaction facilitates DSG3 localization and retention at cell-cell junctions. Interacts with CDH1; the interaction is required for CDH1 localization to developing adherens junctions. Interacts with RAC1; the interaction is required for DSG3 translocation to cell-cell junctions, organization of cortical F-actin bundles and actin anchoring at cell-cell junctions. Interacts with DSC3; the interaction may limit the interaction of DSC3 with p38MAPK family members and therefore repress p38MAPK signaling activation. Expressed in the basal layer of the outer root sheath of the telogen hair club, specifically at the cell membrane between the apex of the cells and the surrounding hair club (at protein level). Expression is less abundant between the lateral margins of the outer root sheath basal cells (at protein level). Expressed in epidermis. Expressed in the epithelium of the tongue.

The protein localises to the cell membrane. Its subcellular location is the cell junction. It is found in the desmosome. It localises to the cytoplasm. The protein resides in the tight junction. Its function is as follows. A component of desmosome cell-cell junctions which are required for positive regulation of cellular adhesion. Required for adherens and desmosome junction assembly in response to mechanical force in keratinocytes. Required for desmosome-mediated cell-cell adhesion of cells surrounding the telogen hair club and the basal layer of the outer root sheath epithelium, consequently is essential for the anchoring of telogen hairs in the hair follicle. Required for the maintenance of the epithelial barrier via promoting desmosome-mediated intercellular attachment of suprabasal epithelium to basal cells. May play a role in the protein stability of the desmosome plaque components DSP, JUP, PKP1, PKP2 and PKP3. Required for YAP1 localization at the plasma membrane in keratinocytes in response to mechanical strain, via the formation of an interaction complex composed of DSG3, PKP1 and YWHAG. May also be involved in the positive regulation of YAP1 target gene transcription and as a result cell proliferation. Positively regulates cellular contractility and cell junction formation via organization of cortical F-actin bundles and anchoring of actin to tight junctions, in conjunction with RAC1. The cytoplasmic pool of DSG3 is required for the localization of CDH1 and CTNNB1 at developing adherens junctions, potentially via modulation of SRC activity. Inhibits keratinocyte migration via suppression of p38MAPK signaling, may therefore play a role in moderating wound healing. The protein is Desmoglein-3 (Dsg3) of Mus musculus (Mouse).